The sequence spans 209 residues: LexA repressor (209 aa).

The H-T-H motif DNA-binding region spans 28 to 48 (RVELAKILGFRSANAAEEHLK). Active-site for autocatalytic cleavage activity residues include Ser126 and Lys163.

It belongs to the peptidase S24 family. In terms of assembly, homodimer.

The catalysed reaction is Hydrolysis of Ala-|-Gly bond in repressor LexA.. Its function is as follows. Represses a number of genes involved in the response to DNA damage (SOS response), including recA and lexA. In the presence of single-stranded DNA, RecA interacts with LexA causing an autocatalytic cleavage which disrupts the DNA-binding part of LexA, leading to derepression of the SOS regulon and eventually DNA repair. This Psychromonas ingrahamii (strain DSM 17664 / CCUG 51855 / 37) protein is LexA repressor.